Consider the following 545-residue polypeptide: Capsular polysaccharide phosphotransferase SacB (545 aa).

It belongs to the stealth family.

May be the polymerase that links individual UDP-N-acetyl-D-mannosamine monomers. In serotype A the capsule is composed of repeated units of (alpha 1-6)-linked N-acetyl-D-mannosamine-1-phosphate. The sequence is that of Capsular polysaccharide phosphotransferase SacB (sacB) from Neisseria meningitidis serogroup A.